Here is a 146-residue protein sequence, read N- to C-terminus: uncharacterized protein (146 aa).

In terms of domain architecture, N-acetyltransferase spans 1-120; it reads MTDKFDANDE…TILKWEKNMD (120 aa).

This sequence belongs to the acetyltransferase family.

This is an uncharacterized protein from Streptococcus pyogenes serotype M6 (strain ATCC BAA-946 / MGAS10394).